The primary structure comprises 61 residues: MAKKALIEKSKRTPKYKTREYSRCKVCGRPRAVYREFGLCRICFREQALEGKLPGVKKASW.

Cys24, Cys27, Cys40, and Cys43 together coordinate Zn(2+).

This sequence belongs to the universal ribosomal protein uS14 family. Zinc-binding uS14 subfamily. Part of the 30S ribosomal subunit. Contacts proteins S3 and S10. Requires Zn(2+) as cofactor.

Binds 16S rRNA, required for the assembly of 30S particles and may also be responsible for determining the conformation of the 16S rRNA at the A site. The protein is Small ribosomal subunit protein uS14 of Petrotoga mobilis (strain DSM 10674 / SJ95).